A 237-amino-acid chain; its full sequence is Ribitol-5-phosphate cytidylyltransferase (237 aa).

Residues 7 to 10 (LAGG) and 80 to 86 (GEDRNET) contribute to the CTP site.

Belongs to the IspD/TarI cytidylyltransferase family. TarI subfamily.

The enzyme catalyses D-ribitol 5-phosphate + CTP + H(+) = CDP-L-ribitol + diphosphate. It functions in the pathway cell wall biogenesis; poly(ribitol phosphate) teichoic acid biosynthesis. Its function is as follows. Catalyzes the transfer of the cytidylyl group of CTP to D-ribitol 5-phosphate. The chain is Ribitol-5-phosphate cytidylyltransferase from Listeria monocytogenes serotype 4b (strain F2365).